Reading from the N-terminus, the 411-residue chain is MTHLSKMPTGYTPPAEWKYPIDLSIDYRKPENRMYLLKAWVEALSYTEEHNQQVRLMDYAIEVTEGITQLEKIERKIWMAFLWGCCYNGIGPWTIYSEFPVPPQSPQEFKRFCDWYNLNFERMRFDTDCRYRKSKMIPCVQSYIDWLAGRTQMDAFRPLLETKLQSDQFVKLWDTAMGWKYFGRLSAWNFLEALNMVFGNMYQIDVPGFMLRDRDGSESNRNGAAFLSNRDDWVTKHGKKKINGCPITDEECDILEADLEQAFKDCVAEFGHITFINRLNFETSGACWLKKFFRLKNTRYIGWDAERTWDEIDYMERIWPEYSCKALWEARSLWLPDTLLCEKAPAGHVPGVQKWKMPVFFETGVPLHIWHLQQGTRWEPSEVYTNLKMPVRKIDDNPKSTSVNLMSLLKR.

Residue Glu282 is part of the active site.

This sequence belongs to the thymidine aminotransferase family.

The catalysed reaction is 5-phosphomethyl-dUMP in DNA + L-serine = 5-O-(L-seryl)-dTMP in DNA + phosphate. Transfers serine to 5-phosphomethyl-2'-deoxyuridine (5-PmdU) to produce 5-O-serinylthymidine (O-SerT) as a step in the pathway leading to thymidine hypermodifications in the viral genome. As a final result of the pathway of hypermodification, 5-aminoethoxy-2'-deoxymethyluridine (5-NeOmdU) substitutes for about 40% of the thymidines in the viral DNA. These modifications probably prevent degradation of viral genome by the host restriction-modification antiviral defense system. The polypeptide is Serinyltransferase (Salmonella typhi).